Consider the following 545-residue polypeptide: Labda-7,13-dienyl diphosphate synthase (545 aa).

A DXDDTA motif motif is present at residues 315–320 (DADDTA). Positions 444 to 450 (RRTDGSW) match the RXXDGSW motif motif. Positions 526–545 (LPAPAPVPPGFDAARTGPAD) are disordered.

It belongs to the terpene synthase family. Requires Mg(2+) as cofactor.

The catalysed reaction is (2E,6E,10E)-geranylgeranyl diphosphate = (13E)-labda-7,13-dien-15-yl diphosphate. Its function is as follows. Involved in the biosynthesis of the labdane-type bicyclic diterpene labda-7,13(16),14-triene. Catalyzes the conversion of geranylgeranyl diphosphate (GGDP) into labda-7,13(E)-dienyl diphosphate. The chain is Labda-7,13-dienyl diphosphate synthase from Streptomyces clavuligerus.